The chain runs to 343 residues: Protein RecA (343 aa).

68-75 (GPESGGKT) contributes to the ATP binding site.

The protein belongs to the RecA family.

Its subcellular location is the cytoplasm. Functionally, can catalyze the hydrolysis of ATP in the presence of single-stranded DNA, the ATP-dependent uptake of single-stranded DNA by duplex DNA, and the ATP-dependent hybridization of homologous single-stranded DNAs. It interacts with LexA causing its activation and leading to its autocatalytic cleavage. The sequence is that of Protein RecA from Syntrophus aciditrophicus (strain SB).